A 274-amino-acid polypeptide reads, in one-letter code: 2,3,4,5-tetrahydropyridine-2,6-dicarboxylate N-succinyltransferase (274 aa).

Residues R107 and D144 each coordinate substrate.

Belongs to the transferase hexapeptide repeat family. As to quaternary structure, homotrimer.

It localises to the cytoplasm. The enzyme catalyses (S)-2,3,4,5-tetrahydrodipicolinate + succinyl-CoA + H2O = (S)-2-succinylamino-6-oxoheptanedioate + CoA. The protein operates within amino-acid biosynthesis; L-lysine biosynthesis via DAP pathway; LL-2,6-diaminopimelate from (S)-tetrahydrodipicolinate (succinylase route): step 1/3. The sequence is that of 2,3,4,5-tetrahydropyridine-2,6-dicarboxylate N-succinyltransferase from Cereibacter sphaeroides (strain ATCC 17025 / ATH 2.4.3) (Rhodobacter sphaeroides).